We begin with the raw amino-acid sequence, 448 residues long: MKSTVETLSPTRVRLAIEVPFVELEPSLKKAYREIGQQVQVPGFRRGKVPAVVIDQRVGRGTVLNEAVQEAIPQNILAAVREHDLKTLGRPEVEITEFTDGDSLNFTAEVDVRPELTLPDLSTVEVTVDELKIDDSEIDEQVQSLRERFATLKTVDRAAGEGDFVQIDLNATVDGEEVPGGSASNLSHEVGSKQLLPGLDEAVVGLAAGASTTFTTQLVGGDHAGRDAEVSVTVRTVKEKELPELDDEFAELASEFDTMAELRDDVRERVTRGKRVEQIYAARDKALEQIVEAADVPAPEGVVREEVESRKTAMVDQLERIGASMEEYLAAEEKTEEQIDTELNEAAVQGVKIQLLLDTVADAEDVQVSDDEFGHEIVHRAQRAGVAPQQFYDQLVRSGAAGAVYGDVRRGKALASIMDRITIRDAAGEPVSLDALRAENEAEHAHAE.

The PPIase FKBP-type domain maps to 162-243 (GDFVQIDLNA…VRTVKEKELP (82 aa)).

Belongs to the FKBP-type PPIase family. Tig subfamily.

The protein resides in the cytoplasm. The catalysed reaction is [protein]-peptidylproline (omega=180) = [protein]-peptidylproline (omega=0). In terms of biological role, involved in protein export. Acts as a chaperone by maintaining the newly synthesized protein in an open conformation. Functions as a peptidyl-prolyl cis-trans isomerase. The sequence is that of Trigger factor from Salinispora arenicola (strain CNS-205).